We begin with the raw amino-acid sequence, 495 residues long: Carbohydrate oxidase (495 aa).

Positions 1–22 (MRSAFILALGLITASADALVTR) are cleaved as a signal peptide. The 175-residue stretch at 55-229 (LPYIPTAIAQ…AVWKLATFPA (175 aa)) folds into the FAD-binding PCMH-type domain. Positions 92–154 (HSYASFGFGG…YGRAISHGTC (63 aa)) form a cross-link, 6-(S-cysteinyl)-8alpha-(pros-histidyl)-FAD (His-Cys). N-linked (GlcNAc...) asparagine glycans are attached at residues Asn-244 and Asn-417.

The protein belongs to the oxygen-dependent FAD-linked oxidoreductase family. FAD is required as a cofactor. In terms of processing, the FAD cofactor is bound via a bicovalent 6-S-cysteinyl, 8alpha-N1-histidyl FAD linkage.

Its subcellular location is the secreted. The enzyme catalyses beta-D-glucose + O2 = D-glucono-1,5-lactone + H2O2. The catalysed reaction is D-galactose + O2 = D-galactono-1,5-lactone + H2O2. It carries out the reaction D-cellobiose + O2 = D-cellobiono-1,5-lactone + H2O2. It catalyses the reaction beta-lactose + O2 = lactobiono-1,5-lactone + H2O2. The enzyme catalyses D-maltose + O2 = D-maltobiono-1,5-lactone + H2O2. The catalysed reaction is D-xylose + O2 = D-xylono-1,5-lactone + H2O2. Functionally, catalyzes the selective oxidation of C1 hydroxyl moieties on mono-, oligo- and polysaccharides with concomitant reduction of molecular oxygen to hydrogen peroxide. This results in the formation of the corresponding lactones, which typically undergo spontaneous hydrolysis. Carbohydrate oxidase is able to oxidize a variety of substrates including D-glucose, D-galactose, D-xylose, D-maltose, D-cellobiose, and lactose. In addition, among various oligosaccharides, the enzyme preferred tetrameric dextrins, indicating a favorable interaction of four linked glucose units with the substrate binding pocket. In Microdochium nivale (Pink snow mold), this protein is Carbohydrate oxidase.